Reading from the N-terminus, the 305-residue chain is Ornithine carbamoyltransferase (305 aa).

Residues 47–50 (STRT), arginine 98, and 125–128 (HPCQ) each bind carbamoyl phosphate. L-ornithine is bound by residues asparagine 156, aspartate 221, and 225–226 (SM). Residues 262-263 (CL) and arginine 290 contribute to the carbamoyl phosphate site.

Belongs to the aspartate/ornithine carbamoyltransferase superfamily. OTCase family.

The protein resides in the cytoplasm. It carries out the reaction carbamoyl phosphate + L-ornithine = L-citrulline + phosphate + H(+). It participates in amino-acid biosynthesis; L-arginine biosynthesis; L-arginine from L-ornithine and carbamoyl phosphate: step 1/3. Its function is as follows. Reversibly catalyzes the transfer of the carbamoyl group from carbamoyl phosphate (CP) to the N(epsilon) atom of ornithine (ORN) to produce L-citrulline. In Methanococcus vannielii (strain ATCC 35089 / DSM 1224 / JCM 13029 / OCM 148 / SB), this protein is Ornithine carbamoyltransferase.